The sequence spans 428 residues: 3-deoxy-D-manno-octulosonic acid transferase (428 aa).

Glutamate 64 acts as the Proton acceptor in catalysis. Residues proline 274 to arginine 275, leucine 316 to glutamate 318, and asparagine 342 to glutamate 345 each bind CMP.

The protein belongs to the glycosyltransferase group 1 family. Glycosyltransferase 30 subfamily.

The protein resides in the cell inner membrane. The enzyme catalyses lipid IVA (E. coli) + CMP-3-deoxy-beta-D-manno-octulosonate = alpha-Kdo-(2-&gt;6)-lipid IVA (E. coli) + CMP + H(+). It participates in bacterial outer membrane biogenesis; LPS core biosynthesis. Functionally, involved in lipopolysaccharide (LPS) biosynthesis. Catalyzes the transfer of a single 3-deoxy-D-manno-octulosonate (Kdo) residue from CMP-Kdo to lipid IV(A), the tetraacyldisaccharide-1,4'-bisphosphate precursor of lipid A. In Bordetella pertussis, this protein is 3-deoxy-D-manno-octulosonic acid transferase (waaA).